A 262-amino-acid chain; its full sequence is Zinc finger protein 138 (262 aa).

A C2H2-type 1 zinc finger spans residues 110–132 (FRCKECDKSLCMLSRLTQHKKIH). Residues 138–160 (YKCEECGKTFNWSTNLSKPKKIH) form a C2H2-type 2; degenerate zinc finger. The C2H2-type 3; degenerate zinc-finger motif lies at 166–188 (YKCEVCGKAFHQSSILTKHKIIR). Residues 194 to 216 (YKCAHCGKAFKQSSHLTRHKIIH) form a C2H2-type 4 zinc finger. The C2H2-type 5; degenerate zinc finger occupies 222–244 (YKCEQCGKVFKQSPTLTKHQIIY). A C2H2-type 6; degenerate zinc finger spans residues 250–262 (YKCEECGKAFNLS).

The protein belongs to the krueppel C2H2-type zinc-finger protein family.

The protein localises to the nucleus. Functionally, may be involved in transcriptional regulation as a repressor. This Homo sapiens (Human) protein is Zinc finger protein 138 (ZNF138).